A 393-amino-acid polypeptide reads, in one-letter code: S-adenosylmethionine synthase 3 (393 aa).

Position 43 (Glu43) interacts with K(+). L-methionine-binding residues include Glu56 and Gln99. ATP contacts are provided by residues 167 to 169 (DGK), 235 to 238 (SGRF), Asp246, 252 to 253 (RK), Ala269, Lys273, and Lys277. Residue Asp246 participates in L-methionine binding. Lys277 is an L-methionine binding site.

Belongs to the AdoMet synthase family. In terms of assembly, homotetramer. It depends on Mn(2+) as a cofactor. Requires Mg(2+) as cofactor. Co(2+) serves as cofactor. K(+) is required as a cofactor.

It localises to the cytoplasm. It carries out the reaction L-methionine + ATP + H2O = S-adenosyl-L-methionine + phosphate + diphosphate. Its pathway is amino-acid biosynthesis; S-adenosyl-L-methionine biosynthesis; S-adenosyl-L-methionine from L-methionine: step 1/1. Its function is as follows. Catalyzes the formation of S-adenosylmethionine from methionine and ATP. The reaction comprises two steps that are both catalyzed by the same enzyme: formation of S-adenosylmethionine (AdoMet) and triphosphate, and subsequent hydrolysis of the triphosphate. This chain is S-adenosylmethionine synthase 3 (SAM3), found in Actinidia chinensis var. chinensis (Chinese soft-hair kiwi).